A 109-amino-acid polypeptide reads, in one-letter code: Con-Ins K2 (109 aa).

The first 24 residues, methionine 1 to glycine 24, serve as a signal peptide directing secretion. Positions asparagine 25 to arginine 29 are excised as a propeptide. Cystine bridges form between cysteine 41/cysteine 90, cysteine 53/cysteine 103, and cysteine 89/cysteine 94. Glutamate 44 carries the 4-carboxyglutamate modification. The propeptide at arginine 57–arginine 83 is c peptide.

This sequence belongs to the insulin family. Heterodimer of A and B chains; disulfide-linked. Expressed by the venom gland.

Its subcellular location is the secreted. Its function is as follows. This venom insulin, from a fish-hunting cone snail, facilitates prey capture by rapidly inducing hypoglycemic shock. It is one of the smallest known insulin found in nature and lacks the C-terminal segment of the B chain that, in human insulin, mediates engagement of the insulin receptor (INSR) and assembly of the hormone's hexameric storage form. Despite lacking this segment, it both binds and activates human insulin receptor (long isoform (HIR-B)) with a moderate potency (EC(50)=373.2 nM). In vivo, intraperitoneal injection of this peptide into zebrafish lowers blood glucose with a lower potency than human insulin. In addition, when applied to water, this peptide reduces overall locomotor activity of zebrafish larvae, observed as a significant decrease in the percentage of time spent swimming and movement frequency. When tested on a mouse model of diabetes, this insulin also lowers blood glucose with a 20-fold lower potency than human insulin. The protein is Con-Ins K2 of Conus kinoshitai (Kinoshita's cone).